A 1107-amino-acid polypeptide reads, in one-letter code: Integrator complex subunit 6 homolog (1107 aa).

Residues 2-195 (LITFVVDTSG…LPMEPAIAPM (194 aa)) enclose the VWFA domain. Disordered regions lie at residues 454-515 (RIIN…SGNL), 542-572 (DNET…SSNI), 629-801 (TLRD…VSSP), 818-861 (QISS…IVNN), and 946-1034 (VVRP…TTPN). Composition is skewed to low complexity over residues 460 to 513 (QQQQ…SGSG) and 546 to 562 (SENS…STTG). A compositionally biased stretch (basic and acidic residues) spans 629–639 (TLRDIDDDKKP). The span at 693–801 (PSLPTLNSLS…PIPSTTVSSP (109 aa)) shows a compositional bias: low complexity. Over residues 846–857 (SPPPPPPPPPLP) the composition is skewed to pro residues. Residues 956 to 975 (PLTIDTLTSSSSSSTIPTTT) show a composition bias toward low complexity. The span at 976 to 996 (NGSLSTHDTPNTSPTLSSINY) shows a compositional bias: polar residues. The span at 997 to 1034 (NNNNNNNNNNNNNNNNNNNNNNNNNNRKNSIITTTTPN) shows a compositional bias: low complexity. The 63-residue stretch at 1041–1103 (IKFVHKEIRR…SLISKLIGYI (63 aa)) folds into the MIF4G domain.

It belongs to the Integrator subunit 6 family. In terms of assembly, component of the Integrator complex. The core complex associates with protein phosphatase 2A subunits, to form the Integrator-PP2A (INTAC) complex.

It is found in the nucleus. The protein resides in the chromosome. Component of the integrator complex, a multiprotein complex that terminates RNA polymerase II (Pol II) transcription in the promoter-proximal region of genes. The integrator complex provides a quality checkpoint during transcription elongation by driving premature transcription termination of transcripts that are unfavorably configured for transcriptional elongation: the complex terminates transcription by (1) catalyzing dephosphorylation of the C-terminal domain (CTD) of Pol II subunit polr2a, (2) degrading the exiting nascent RNA transcript via endonuclease activity and (3) promoting the release of Pol II from bound DNA. The integrator complex is also involved in terminating the synthesis of non-coding Pol II transcripts, such as enhancer RNAs (eRNAs), small nuclear RNAs (snRNAs), telomerase RNAs and long non-coding RNAs (lncRNAs). Within the integrator complex, INTS6 acts as a molecular adapter that promotes assembly of protein phosphatase 2A (PP2A) subunits to the integrator core complex, promoting recruitment of PP2A to transcription pause-release checkpoint. The chain is Integrator complex subunit 6 homolog (ints6) from Dictyostelium discoideum (Social amoeba).